A 483-amino-acid polypeptide reads, in one-letter code: ATP-dependent protease ATPase subunit HslU (483 aa).

ATP contacts are provided by residues valine 18 and 60-65; that span reads GVGKTE. Composition is skewed to low complexity over residues 136-147 and 171-181; these read LPGGAPQPAPAQ and AQADASQASPP. Residues 136-212 are disordered; the sequence is LPGGAPQPAP…HGGKLDDREV (77 aa). A compositionally biased stretch (polar residues) spans 182 to 191; that stretch reads TGTGSAPDSR. Residues 192 to 209 show a composition bias toward basic and acidic residues; it reads SSTREKLRTLWHGGKLDD. Residues aspartate 296, glutamate 361, and arginine 433 each coordinate ATP.

This sequence belongs to the ClpX chaperone family. HslU subfamily. In terms of assembly, a double ring-shaped homohexamer of HslV is capped on each side by a ring-shaped HslU homohexamer. The assembly of the HslU/HslV complex is dependent on binding of ATP.

Its subcellular location is the cytoplasm. In terms of biological role, ATPase subunit of a proteasome-like degradation complex; this subunit has chaperone activity. The binding of ATP and its subsequent hydrolysis by HslU are essential for unfolding of protein substrates subsequently hydrolyzed by HslV. HslU recognizes the N-terminal part of its protein substrates and unfolds these before they are guided to HslV for hydrolysis. The chain is ATP-dependent protease ATPase subunit HslU from Nitratidesulfovibrio vulgaris (strain DSM 19637 / Miyazaki F) (Desulfovibrio vulgaris).